Consider the following 809-residue polypeptide: ATP-dependent zinc metalloprotease FTSH 3, mitochondrial (809 aa).

The transit peptide at 1 to 83 directs the protein to the mitochondrion; it reads MTMIFFSKLN…FANPRLRRFF (83 aa). Over residues 93 to 121 the composition is skewed to basic and acidic residues; sequence YENYFPKDKQEPKSDQKSEHKEGSEKNEN. Positions 93–122 are disordered; it reads YENYFPKDKQEPKSDQKSEHKEGSEKNENE. The chain crosses the membrane as a helical span at residues 132 to 152; it reads FQNLLIPLLALAVFFSTFSFG. 362-369 provides a ligand contact to ATP; it reads GPPGTGKT. His586 contributes to the Zn(2+) binding site. Glu587 is a catalytic residue. Zn(2+) contacts are provided by His590 and Asp662. The disordered stretch occupies residues 776 to 809; the sequence is GFEETEKDSAATPTVEPVVDDGAPPPFEPQVVPT.

In the N-terminal section; belongs to the AAA ATPase family. It in the C-terminal section; belongs to the peptidase M41 family. It depends on Zn(2+) as a cofactor.

It is found in the mitochondrion inner membrane. Functionally, probable ATP-dependent zinc metallopeptidase. Involved in the assembly and/or stability of the complexes I and V of the mitochondrial oxidative phosphorylation system. The chain is ATP-dependent zinc metalloprotease FTSH 3, mitochondrial (FTSH3) from Arabidopsis thaliana (Mouse-ear cress).